We begin with the raw amino-acid sequence, 373 residues long: Methionine import ATP-binding protein MetN 1 (373 aa).

One can recognise an ABC transporter domain in the interval 29-270 (ILIDRVRKVY…PRHEVTRRFV (242 aa)). ATP is bound at residue 67-74 (GRSGAGKS).

Belongs to the ABC transporter superfamily. Methionine importer (TC 3.A.1.24) family. The complex is composed of two ATP-binding proteins (MetN), two transmembrane proteins (MetI) and a solute-binding protein (MetQ).

The protein resides in the cell inner membrane. It catalyses the reaction L-methionine(out) + ATP + H2O = L-methionine(in) + ADP + phosphate + H(+). The enzyme catalyses D-methionine(out) + ATP + H2O = D-methionine(in) + ADP + phosphate + H(+). Part of the ABC transporter complex MetNIQ involved in methionine import. Responsible for energy coupling to the transport system. This is Methionine import ATP-binding protein MetN 1 from Rhodopseudomonas palustris (strain ATCC BAA-98 / CGA009).